We begin with the raw amino-acid sequence, 21 residues long: Neuropeptide gamma (21 aa).

Residues 1 to 21 are disordered; sequence SSANPQITRKRHKINSFVGLM. Methionine 21 is modified (methionine amide).

This sequence belongs to the tachykinin family.

Its subcellular location is the secreted. In terms of biological role, tachykinins are active peptides which excite neurons, evoke behavioral responses, and contract (directly or indirectly) many smooth muscles. Is a potent vasoconstrictor and secretagogue that plays a regulatory role in the central control of ventilation, in particular, the heart rate variability (HRV). This is Neuropeptide gamma from Oncorhynchus mykiss (Rainbow trout).